The following is a 363-amino-acid chain: tRNA U34 carboxymethyltransferase (363 aa).

Carboxy-S-adenosyl-L-methionine is bound by residues lysine 101, tryptophan 134, lysine 139, glycine 159, 181 to 183, 221 to 222, methionine 237, tyrosine 241, and arginine 356; these read DPS and LE.

This sequence belongs to the class I-like SAM-binding methyltransferase superfamily. CmoB family. Homotetramer.

The catalysed reaction is carboxy-S-adenosyl-L-methionine + 5-hydroxyuridine(34) in tRNA = 5-carboxymethoxyuridine(34) in tRNA + S-adenosyl-L-homocysteine + H(+). Catalyzes carboxymethyl transfer from carboxy-S-adenosyl-L-methionine (Cx-SAM) to 5-hydroxyuridine (ho5U) to form 5-carboxymethoxyuridine (cmo5U) at position 34 in tRNAs. The sequence is that of tRNA U34 carboxymethyltransferase from Psychrobacter cryohalolentis (strain ATCC BAA-1226 / DSM 17306 / VKM B-2378 / K5).